The following is a 327-amino-acid chain: uncharacterized protein (327 aa).

The S4 RNA-binding domain maps to 32–105 (VRLDKWLAEQ…IPLDILYEDE (74 aa)). Asp156 is an active-site residue.

Belongs to the pseudouridine synthase RluA family.

It carries out the reaction a uridine in RNA = a pseudouridine in RNA. This is an uncharacterized protein from Synechocystis sp. (strain ATCC 27184 / PCC 6803 / Kazusa).